Consider the following 442-residue polypeptide: tRNA-2-methylthio-N(6)-dimethylallyladenosine synthase (442 aa).

The MTTase N-terminal domain maps to 2-120 (KKVFIRTFGC…LPKMIVDKET (119 aa)). [4Fe-4S] cluster is bound by residues Cys11, Cys49, Cys83, Cys157, Cys161, and Cys164. One can recognise a Radical SAM core domain in the interval 143-375 (RVEGGAAFVS…NEVIEAETAR (233 aa)). The 64-residue stretch at 378-441 (QTMIGTVQRC…TFSLRGKVVE (64 aa)) folds into the TRAM domain.

The protein belongs to the methylthiotransferase family. MiaB subfamily. Monomer. [4Fe-4S] cluster is required as a cofactor.

Its subcellular location is the cytoplasm. It catalyses the reaction N(6)-dimethylallyladenosine(37) in tRNA + (sulfur carrier)-SH + AH2 + 2 S-adenosyl-L-methionine = 2-methylsulfanyl-N(6)-dimethylallyladenosine(37) in tRNA + (sulfur carrier)-H + 5'-deoxyadenosine + L-methionine + A + S-adenosyl-L-homocysteine + 2 H(+). In terms of biological role, catalyzes the methylthiolation of N6-(dimethylallyl)adenosine (i(6)A), leading to the formation of 2-methylthio-N6-(dimethylallyl)adenosine (ms(2)i(6)A) at position 37 in tRNAs that read codons beginning with uridine. This is tRNA-2-methylthio-N(6)-dimethylallyladenosine synthase from Neisseria meningitidis serogroup C (strain 053442).